We begin with the raw amino-acid sequence, 394 residues long: 1-deoxy-D-xylulose 5-phosphate reductoisomerase (394 aa).

NADPH is bound by residues Thr-14, Gly-15, Ser-16, Ile-17, Gly-40, Asn-43, and Asn-130. Residue Lys-131 participates in 1-deoxy-D-xylulose 5-phosphate binding. Position 132 (Glu-132) interacts with NADPH. Residue Asp-154 coordinates Mn(2+). 1-deoxy-D-xylulose 5-phosphate is bound by residues Ser-155, Glu-156, Ser-180, and His-203. Glu-156 lines the Mn(2+) pocket. An NADPH-binding site is contributed by Gly-209. Residues Ser-216, Asn-221, Lys-222, and Glu-225 each coordinate 1-deoxy-D-xylulose 5-phosphate. A Mn(2+)-binding site is contributed by Glu-225.

The protein belongs to the DXR family. It depends on Mg(2+) as a cofactor. Mn(2+) is required as a cofactor.

It catalyses the reaction 2-C-methyl-D-erythritol 4-phosphate + NADP(+) = 1-deoxy-D-xylulose 5-phosphate + NADPH + H(+). It participates in isoprenoid biosynthesis; isopentenyl diphosphate biosynthesis via DXP pathway; isopentenyl diphosphate from 1-deoxy-D-xylulose 5-phosphate: step 1/6. Functionally, catalyzes the NADPH-dependent rearrangement and reduction of 1-deoxy-D-xylulose-5-phosphate (DXP) to 2-C-methyl-D-erythritol 4-phosphate (MEP). The protein is 1-deoxy-D-xylulose 5-phosphate reductoisomerase of Corynebacterium efficiens (strain DSM 44549 / YS-314 / AJ 12310 / JCM 11189 / NBRC 100395).